The chain runs to 426 residues: Vitamin D3 receptor (426 aa).

The segment at residues 21-96 is a DNA-binding region (nuclear receptor); the sequence is PRICGVCGDR…IGMMKEFILT (76 aa). Zn(2+)-binding residues include Cys-24, Cys-27, Cys-41, Cys-44, Cys-60, Cys-66, Cys-76, and Cys-79. 2 NR C4-type zinc fingers span residues 24-44 and 60-84; these read CGVC…CEGC and CPFN…LKRC. The segment at 97–126 is hinge; the sequence is DEEVQRKREMILKRKEEEALKDSLRPKLSE. The NR LBD domain occupies 127-422; that stretch reads EQQRIITTLL…LTPLLFEVFG (296 aa). Tyr-143 contacts calcitriol. The interval 147–215 is disordered; sequence YSDFSQFRPP…NEEDSDDPSV (69 aa). Residues 175–191 are compositionally biased toward low complexity; it reads SFSGNSSSSCSDHCTSS. Positions 192–204 are enriched in polar residues; it reads PDTMEPTSFSNQD. Residue Ser-235 coordinates calcitriol. The interaction with coactivator LXXLL motif stretch occupies residues 244–262; sequence KMIPGFRDLTPEDQIVLLK. Residues Arg-272, Ser-276, His-304, and His-396 each contribute to the calcitriol site. The 9aaTAD motif lies at 415–423; sequence PLLFEVFGN.

Belongs to the nuclear hormone receptor family. NR1 subfamily. In terms of assembly, homodimer in the absence of bound vitamin D3. Heterodimer with RXRA after vitamin D3 binding. Interacts with MED1, NCOA1, NCOA2, NCOA3 and NCOA6 coactivators, leading to a strong increase of transcription of target genes. Interacts with the corepressor NCOR1. Interacts with SNW1. Interacts with IRX4, the interaction does not affect its transactivation activity. Interacts with CRY1. Interacts with CRY2 in a ligand-dependent manner. In terms of processing, ubiquitinated by UBR5, leading to its degradation: UBR5 specifically recognizes and binds ligand-bound VDR when it is not associated with coactivators (NCOAs). In presence of NCOAs, the UBR5-degron is not accessible, preventing its ubiquitination and degradation. As to expression, mammary gland, expression increases during lactation. Also found in colon, expression is down-regulated at parturition.

The protein localises to the nucleus. Its subcellular location is the cytoplasm. Its function is as follows. Nuclear receptor for calcitriol, the active form of vitamin D3 which mediates the action of this vitamin on cells. Enters the nucleus upon vitamin D3 binding where it forms heterodimers with the retinoid X receptor/RXR. The VDR-RXR heterodimers bind to specific response elements on DNA and activate the transcription of vitamin D3-responsive target genes. Plays a central role in calcium homeostasis. Also functions as a receptor for the secondary bile acid lithocholic acid (LCA) and its metabolites. This Bos taurus (Bovine) protein is Vitamin D3 receptor (VDR).